The following is a 208-amino-acid chain: Imidazoleglycerol-phosphate dehydratase (208 aa).

Positions 1–22 (MTEDTETSSTGAGADDRTAAIS) are disordered.

This sequence belongs to the imidazoleglycerol-phosphate dehydratase family.

The protein resides in the cytoplasm. The enzyme catalyses D-erythro-1-(imidazol-4-yl)glycerol 3-phosphate = 3-(imidazol-4-yl)-2-oxopropyl phosphate + H2O. The protein operates within amino-acid biosynthesis; L-histidine biosynthesis; L-histidine from 5-phospho-alpha-D-ribose 1-diphosphate: step 6/9. In Haloquadratum walsbyi (strain DSM 16790 / HBSQ001), this protein is Imidazoleglycerol-phosphate dehydratase.